Reading from the N-terminus, the 533-residue chain is Acyl-CoA-binding domain-containing protein 5 (533 aa).

The 90-residue stretch at 42 to 131 (HETRFEAAVK…MKKILETMPM (90 aa)) folds into the ACB domain. An acyl-CoA-binding positions include 53-62 (IQSLPKNGSF), 73-77 (YSFYK), Lys99, and Tyr118. Residues 182–227 (TPNAKTVNGKAESSDSGAESEEEAAQEDPKRPEPRDSDKKMMKKSA) are disordered. 4 positions are modified to phosphoserine: Ser194, Ser195, Ser197, and Ser201. A compositionally biased stretch (basic and acidic residues) spans 208-227 (EDPKRPEPRDSDKKMMKKSA). Ser244 and Ser314 each carry phosphoserine. The tract at residues 339–443 (GGNPSQPLES…ERWGSDRGSR (105 aa)) is disordered. Residues 374-383 (GKGEVKRGGE) are compositionally biased toward basic and acidic residues. A Phosphoserine modification is found at Ser429. The segment covering 432 to 442 (DGERWGSDRGS) has biased composition (basic and acidic residues). Positions 448 to 478 (EQIALVLMRLQEDMQNVLQRLHKLEMLAASQ) form a coiled coil. Lys470 carries the post-translational modification N6-acetyllysine. The chain crosses the membrane as a helical span at residues 503–525 (SPGALTFAIIWPFIAQWLVHLYY).

This sequence belongs to the ATG37 family. In terms of tissue distribution, highly expressed in brain and liver. Lower levels of expression in spleen and heart.

It is found in the peroxisome membrane. In terms of biological role, acyl-CoA binding protein which acts as the peroxisome receptor for pexophagy but is dispensable for aggrephagy and nonselective autophagy. Binds medium- and long-chain acyl-CoA esters. This is Acyl-CoA-binding domain-containing protein 5 (ACBD5) from Bos taurus (Bovine).